We begin with the raw amino-acid sequence, 1121 residues long: Linoleate 10R-lipoxygenase (1121 aa).

A disordered region spans residues 1–66 (MLRRFSSTFK…NEKKGNSVSP (66 aa)). The segment covering 22–36 (TASSSSAAVANTNNN) has biased composition (low complexity). Positions 50 to 61 (SSSDDDRNEKKG) are enriched in basic and acidic residues. Residue His253 is the Proton acceptor of the active site. Residues Asp254, Ser269, Tyr271, Asp273, and Ser275 each contribute to the Ca(2+) site.

This sequence belongs to the peroxidase family.

It carries out the reaction (9Z,12Z)-octadecadienoate + O2 = (8E,10R,12Z)-10-hydroperoxyoctadeca-8,12-dienoate. Functionally, responsible for the synthesis of various fatty acid-derived oxylipins. Oxidizes linoleic acid primarily to 10R-hydroperoxy-8,12-octadecadienoic acid (10R-HPODE) and, to a lesser extent, 8R-hydroperoxylinoleic acid (8R-HPODE). Also synthesizes 10-hydroxy-octadeca-8,12-dienoic acid (10-HODE) from linoleic acid and primarily 8R-hydroxy-octadeca-9-monoenoic acid (8-HOME, also known as psiB beta) from oleic acid. 8-HOME forms part of psi factor, a mixture of oxylipins that regulates the balance between sexual and asexual spore production. Displays epoxyalcohol synthase activity. Plays a role in the synthesis of prostaglandins which may be required for pathogenicity. This chain is Linoleate 10R-lipoxygenase, found in Aspergillus fumigatus (strain ATCC MYA-4609 / CBS 101355 / FGSC A1100 / Af293) (Neosartorya fumigata).